The primary structure comprises 278 residues: Large ribosomal subunit protein uL2 (278 aa).

Disordered regions lie at residues 1 to 58 (MAIR…GGGH) and 225 to 278 (VMNP…KNKR). The span at 37 to 58 (LHGRGGRNAHGRITTRHKGGGH) shows a compositional bias: basic residues. A compositionally biased stretch (basic and acidic residues) spans 253–267 (PEGRTRKNKASDKMI). Positions 268-278 (VRRRRTGKNKR) are enriched in basic residues.

This sequence belongs to the universal ribosomal protein uL2 family. As to quaternary structure, part of the 50S ribosomal subunit. Forms a bridge to the 30S subunit in the 70S ribosome.

In terms of biological role, one of the primary rRNA binding proteins. Required for association of the 30S and 50S subunits to form the 70S ribosome, for tRNA binding and peptide bond formation. It has been suggested to have peptidyltransferase activity; this is somewhat controversial. Makes several contacts with the 16S rRNA in the 70S ribosome. The protein is Large ribosomal subunit protein uL2 of Rhodococcus erythropolis (strain PR4 / NBRC 100887).